The chain runs to 410 residues: NIPA-like protein 3 (410 aa).

A disordered region spans residues 1–24; the sequence is MDGAHSAGLQLQPLPPTSGATSTS. 9 consecutive transmembrane segments (helical) span residues 37–57, 80–100, 105–125, 139–159, 175–195, 206–226, 244–264, 275–295, and 304–324; these read NLIGALLAIFGHLVVSIALNL, WWLGLLLLLLGELGVFASYAF, LIVPLSAVSVIASAIIGIIFI, VLSFVGCGLAIVGTYLLVTFA, LVSWPFLLYMLVAIVLFCLLL, IVVILLLVALLGSMTVVTVKA, PIFYVMFVCMVATAIYQATFL, LIASVGYILSTTAAITAGAIF, and ALHICMFALGCLIAFLGVFLI. Position 376 is a phosphoserine (serine 376). The segment at 389 to 410 is disordered; the sequence is EEHSSRSTPGVPYRVLEHTKKE.

Belongs to the NIPA family.

It is found in the membrane. This Mus musculus (Mouse) protein is NIPA-like protein 3 (Nipal3).